Consider the following 155-residue polypeptide: Protein SprT-like (155 aa).

The SprT-like domain occupies Gln7–Gln144. His67 lines the Zn(2+) pocket. The active site involves Glu68. His71 is a binding site for Zn(2+).

This sequence belongs to the SprT family. Requires Zn(2+) as cofactor.

The protein localises to the cytoplasm. This Listeria welshimeri serovar 6b (strain ATCC 35897 / DSM 20650 / CCUG 15529 / CIP 8149 / NCTC 11857 / SLCC 5334 / V8) protein is Protein SprT-like.